The sequence spans 283 residues: Mitochondrial outer membrane protein porin (283 aa).

This sequence belongs to the eukaryotic mitochondrial porin family.

The protein localises to the mitochondrion outer membrane. Forms a channel through the cell membrane that allows diffusion of small hydrophilic molecules. The channel adopts an open conformation at low or zero membrane potential and a closed conformation at potentials above 30-40 mV. The open state has a weak anion selectivity whereas the closed state is cation-selective. The sequence is that of Mitochondrial outer membrane protein porin from Neurospora crassa (strain ATCC 24698 / 74-OR23-1A / CBS 708.71 / DSM 1257 / FGSC 987).